The following is a 109-amino-acid chain: Sperm-specific class P protein 10 (109 aa).

In terms of domain architecture, MSP spans 2–109; that stretch reads SLTADPPACT…TVTIPMSATA (108 aa).

In terms of tissue distribution, expressed at higher level in testis.

The chain is Sperm-specific class P protein 10 (ssp-10) from Caenorhabditis elegans.